A 227-amino-acid polypeptide reads, in one-letter code: Lipoprotein-releasing system ATP-binding protein LolD (227 aa).

The region spanning Leu7 to Phe227 is the ABC transporter domain. An ATP-binding site is contributed by Ala43–Ser50.

This sequence belongs to the ABC transporter superfamily. Lipoprotein translocase (TC 3.A.1.125) family. The complex is composed of two ATP-binding proteins (LolD) and two transmembrane proteins (LolC and LolE).

Its subcellular location is the cell inner membrane. Part of the ABC transporter complex LolCDE involved in the translocation of mature outer membrane-directed lipoproteins, from the inner membrane to the periplasmic chaperone, LolA. Responsible for the formation of the LolA-lipoprotein complex in an ATP-dependent manner. The polypeptide is Lipoprotein-releasing system ATP-binding protein LolD (Rhizobium johnstonii (strain DSM 114642 / LMG 32736 / 3841) (Rhizobium leguminosarum bv. viciae)).